Consider the following 162-residue polypeptide: Troponin C, skeletal muscle (162 aa).

4 consecutive EF-hand domains span residues 17–52 (EMIA…LGQN), 53–88 (PTKE…QMKE), 93–128 (KSEE…TGEH), and 129–162 (VTEE…EGVQ). Asp-30, Asp-32, Asp-36, Glu-41, Asp-66, Asp-68, Ser-70, Thr-72, Glu-77, Asp-106, Asn-108, Asp-110, Glu-117, Asp-142, Asn-144, Asp-146, Arg-148, and Glu-153 together coordinate Ca(2+).

The protein belongs to the troponin C family.

Its function is as follows. Troponin is the central regulatory protein of striated muscle contraction. Tn consists of three components: Tn-I which is the inhibitor of actomyosin ATPase, Tn-T which contains the binding site for tropomyosin and Tn-C. The binding of calcium to Tn-C abolishes the inhibitory action of Tn on actin filaments. The protein is Troponin C, skeletal muscle (TNNC2) of Meleagris gallopavo (Wild turkey).